The primary structure comprises 164 residues: Thiol peroxidase (164 aa).

Residues 18–163 (INEGDFAPDF…FDAALAAYKN (146 aa)) enclose the Thioredoxin domain. C60 (cysteine sulfenic acid (-SOH) intermediate) is an active-site residue. C60 and C93 are joined by a disulfide.

The protein belongs to the peroxiredoxin family. Tpx subfamily. As to quaternary structure, homodimer.

It carries out the reaction a hydroperoxide + [thioredoxin]-dithiol = an alcohol + [thioredoxin]-disulfide + H2O. Thiol-specific peroxidase that catalyzes the reduction of hydrogen peroxide and organic hydroperoxides to water and alcohols, respectively. Plays a role in cell protection against oxidative stress by detoxifying peroxides. The sequence is that of Thiol peroxidase from Staphylococcus aureus (strain Mu50 / ATCC 700699).